A 503-amino-acid chain; its full sequence is D-alanine--D-alanyl carrier protein ligase (503 aa).

151 to 152 (TS) serves as a coordination point for ATP. Residue Asp196 coordinates D-alanine. Position 291 to 296 (291 to 296 (NTYGPT)) interacts with ATP. Residue Val300 coordinates D-alanine. Residues Asp382, 393-396 (YNGR), and Lys491 each bind ATP. Position 491 (Lys491) interacts with D-alanine.

This sequence belongs to the ATP-dependent AMP-binding enzyme family. DltA subfamily.

The protein localises to the cytoplasm. The enzyme catalyses holo-[D-alanyl-carrier protein] + D-alanine + ATP = D-alanyl-[D-alanyl-carrier protein] + AMP + diphosphate. Its pathway is cell wall biogenesis; lipoteichoic acid biosynthesis. Functionally, catalyzes the first step in the D-alanylation of lipoteichoic acid (LTA), the activation of D-alanine and its transfer onto the D-alanyl carrier protein (Dcp) DltC. In an ATP-dependent two-step reaction, forms a high energy D-alanyl-AMP intermediate, followed by transfer of the D-alanyl residue as a thiol ester to the phosphopantheinyl prosthetic group of the Dcp. D-alanylation of LTA plays an important role in modulating the properties of the cell wall in Gram-positive bacteria, influencing the net charge of the cell wall. This Bacillus anthracis (strain A0248) protein is D-alanine--D-alanyl carrier protein ligase.